A 512-amino-acid chain; its full sequence is Glucose-1-phosphate adenylyltransferase small subunit 2, chloroplastic (512 aa).

The tract at residues 1–21 (MAAIGVLKVPPSSSSSSSSSS) is disordered. A chloroplast-targeting transit peptide spans 1-63 (MAAIGVLKVP…RNPFIVSPKA (63 aa)). Low complexity predominate over residues 12–21 (SSSSSSSSSS).

It belongs to the bacterial/plant glucose-1-phosphate adenylyltransferase family. In terms of assembly, heterotetramer. In terms of tissue distribution, leaves and seeds.

It is found in the plastid. The protein resides in the chloroplast. The enzyme catalyses alpha-D-glucose 1-phosphate + ATP + H(+) = ADP-alpha-D-glucose + diphosphate. It participates in glycan biosynthesis; starch biosynthesis. Its activity is regulated as follows. Activated by 3'phosphoglycerate, inhibited by orthophosphate. Allosteric regulation. In terms of biological role, this protein plays a role in synthesis of starch. It catalyzes the synthesis of the activated glycosyl donor, ADP-glucose from Glc-1-P and ATP. The sequence is that of Glucose-1-phosphate adenylyltransferase small subunit 2, chloroplastic (AGPP) from Vicia faba (Broad bean).